Reading from the N-terminus, the 195-residue chain is MMRFLILATNNQGKLQELRRLLAGTGWVVQAAPPDFAVEETGTTFAENARLKALAAAERTGEWSVGDDSGLAVDALGGAPGVYSARYGRNDGERISRLLAALAGQADRGARFICAIALAEPGRVLKEVEAECRGVILHAPRGNGGFGYDPIFLVPELDKTFAELDIVEKERHSHRGRAVRKLLSGCSRGTFIVDH.

Residue 9–14 (TNNQGK) participates in substrate binding. Mg(2+) is bound by residues glutamate 39 and aspartate 68. Aspartate 68 (proton acceptor) is an active-site residue. Substrate is bound by residues serine 69, 146 to 149 (FGYD), lysine 169, and 174 to 175 (HR).

This sequence belongs to the HAM1 NTPase family. As to quaternary structure, homodimer. Mg(2+) serves as cofactor.

The enzyme catalyses XTP + H2O = XMP + diphosphate + H(+). It catalyses the reaction dITP + H2O = dIMP + diphosphate + H(+). It carries out the reaction ITP + H2O = IMP + diphosphate + H(+). Functionally, pyrophosphatase that catalyzes the hydrolysis of nucleoside triphosphates to their monophosphate derivatives, with a high preference for the non-canonical purine nucleotides XTP (xanthosine triphosphate), dITP (deoxyinosine triphosphate) and ITP. Seems to function as a house-cleaning enzyme that removes non-canonical purine nucleotides from the nucleotide pool, thus preventing their incorporation into DNA/RNA and avoiding chromosomal lesions. The chain is dITP/XTP pyrophosphatase from Gloeobacter violaceus (strain ATCC 29082 / PCC 7421).